The sequence spans 342 residues: S-adenosylmethionine:tRNA ribosyltransferase-isomerase (342 aa).

This sequence belongs to the QueA family. As to quaternary structure, monomer.

The protein localises to the cytoplasm. It catalyses the reaction 7-aminomethyl-7-carbaguanosine(34) in tRNA + S-adenosyl-L-methionine = epoxyqueuosine(34) in tRNA + adenine + L-methionine + 2 H(+). The protein operates within tRNA modification; tRNA-queuosine biosynthesis. In terms of biological role, transfers and isomerizes the ribose moiety from AdoMet to the 7-aminomethyl group of 7-deazaguanine (preQ1-tRNA) to give epoxyqueuosine (oQ-tRNA). The chain is S-adenosylmethionine:tRNA ribosyltransferase-isomerase from Bacillus licheniformis (strain ATCC 14580 / DSM 13 / JCM 2505 / CCUG 7422 / NBRC 12200 / NCIMB 9375 / NCTC 10341 / NRRL NRS-1264 / Gibson 46).